We begin with the raw amino-acid sequence, 183 residues long: TATA box-binding protein-like 1 (183 aa).

The protein belongs to the TBP family. In terms of assembly, binds TFIIA and TFIIB. Present in the brain, heart, liver and gizzard.

It is found in the cytoplasm. It localises to the nucleus. Functionally, part of a specialized transcription system that mediates the transcription of most ribosomal proteins through the 5'-TCT-3' motif which is a core promoter element at these genes. Seems to also mediate the transcription of NF1. Does not bind the TATA box. The polypeptide is TATA box-binding protein-like 1 (TBPL1) (Gallus gallus (Chicken)).